Here is a 454-residue protein sequence, read N- to C-terminus: Pup--protein ligase (454 aa).

Glu-9 is a Mg(2+) binding site. ATP is bound at residue Arg-53. Tyr-55 provides a ligand contact to Mg(2+). The Proton acceptor role is filled by Asp-57. A Mg(2+)-binding site is contributed by Glu-63. ATP-binding residues include Thr-66 and Trp-420.

The protein belongs to the Pup ligase/Pup deamidase family. Pup-conjugating enzyme subfamily.

It carries out the reaction ATP + [prokaryotic ubiquitin-like protein]-L-glutamate + [protein]-L-lysine = ADP + phosphate + N(6)-([prokaryotic ubiquitin-like protein]-gamma-L-glutamyl)-[protein]-L-lysine.. It functions in the pathway protein degradation; proteasomal Pup-dependent pathway. It participates in protein modification; protein pupylation. Catalyzes the covalent attachment of the prokaryotic ubiquitin-like protein modifier Pup to the proteasomal substrate proteins, thereby targeting them for proteasomal degradation. This tagging system is termed pupylation. The ligation reaction involves the side-chain carboxylate of the C-terminal glutamate of Pup and the side-chain amino group of a substrate lysine. In Pseudarthrobacter chlorophenolicus (strain ATCC 700700 / DSM 12829 / CIP 107037 / JCM 12360 / KCTC 9906 / NCIMB 13794 / A6) (Arthrobacter chlorophenolicus), this protein is Pup--protein ligase.